We begin with the raw amino-acid sequence, 636 residues long: Carbon monoxide dehydrogenase 2 (636 aa).

[4Fe-4S] cluster-binding residues include cysteine 39, cysteine 47, cysteine 48, cysteine 51, cysteine 56, and cysteine 70. Residues histidine 261, cysteine 295, cysteine 333, cysteine 446, cysteine 476, and cysteine 526 each coordinate [Ni-4Fe-5S] cluster.

This sequence belongs to the Ni-containing carbon monoxide dehydrogenase family. As to quaternary structure, homodimer. Requires [4Fe-4S] cluster as cofactor. It depends on [Ni-4Fe-5S] cluster as a cofactor.

The protein localises to the cytoplasm. It is found in the cell membrane. The enzyme catalyses CO + 2 oxidized [2Fe-2S]-[ferredoxin] + H2O = 2 reduced [2Fe-2S]-[ferredoxin] + CO2 + 2 H(+). With respect to regulation, inactivated by O(2). Its function is as follows. CODH oxidizes carbon monoxide coupled, via CooF, to the reduction of a hydrogen cation by a hydrogenase (possibly CooH). This is Carbon monoxide dehydrogenase 2 (cooS2) from Carboxydothermus hydrogenoformans (strain ATCC BAA-161 / DSM 6008 / Z-2901).